Consider the following 470-residue polypeptide: Pyruvate kinase I (470 aa).

Arg32 serves as a coordination point for substrate. K(+) contacts are provided by Asn34, Ser36, Asp66, and Thr67. Residue 34-37 (NFSH) participates in ATP binding. Arg73 serves as a coordination point for ATP. Residue Lys76 is modified to N6-acetyllysine. Position 156 (Lys156) interacts with ATP. Glu222 provides a ligand contact to Mg(2+). Gly245, Asp246, and Thr278 together coordinate substrate. Asp246 contacts Mg(2+). Lys319 is modified (N6-acetyllysine).

Belongs to the pyruvate kinase family. In terms of assembly, homotetramer. Mg(2+) is required as a cofactor. K(+) serves as cofactor.

It carries out the reaction pyruvate + ATP = phosphoenolpyruvate + ADP + H(+). Its pathway is carbohydrate degradation; glycolysis; pyruvate from D-glyceraldehyde 3-phosphate: step 5/5. The polypeptide is Pyruvate kinase I (pykF) (Escherichia coli O157:H7).